The following is a 25-amino-acid chain: LASP1 neighbor protein (25 aa).

Residues isoleucine 4–leucine 24 traverse the membrane as a helical segment.

The protein resides in the membrane. Its function is as follows. May play a key role in the skin fibroblasts (FBs)-keratinocyte-like cells (KLCs). This Homo sapiens (Human) protein is LASP1 neighbor protein.